We begin with the raw amino-acid sequence, 270 residues long: uncharacterized protein (270 aa).

2 disordered regions span residues 1–21 (MSTN…YEKP) and 53–77 (PNIL…AKLN). Residues 58-75 (SKHDGDKNKNDKKKEDAK) are compositionally biased toward basic and acidic residues. The stretch at 182-270 (EENKSREEKH…KIEDNLNTYE (89 aa)) forms a coiled coil.

This is an uncharacterized protein from Plasmodium falciparum (isolate 3D7).